A 470-amino-acid polypeptide reads, in one-letter code: Neuraminidase (470 aa).

Residues 1–6 (MNPNQK) are Intravirion-facing. A helical membrane pass occupies residues 7-27 (IITIGSISIAIGIISLMLQIG). Positions 11 to 33 (GSISIAIGIISLMLQIGNIISIW) are involved in apical transport and lipid raft association. Residues 28–470 (NIISIWASHS…GAELPFTIDK (443 aa)) are Virion surface-facing. The hypervariable stalk region stretch occupies residues 36–90 (HSIQTGSQNHTGICNQRIITYENSTWVNHTYVNINNTNVVAGKDKTSVTLAGNSS). Asparagine 44, asparagine 58, asparagine 63, asparagine 70, and asparagine 88 each carry an N-linked (GlcNAc...) asparagine; by host glycan. The interval 91–470 (LCSISGWAIY…GAELPFTIDK (380 aa)) is head of neuraminidase. 8 cysteine pairs are disulfide-bonded: cysteine 92–cysteine 417, cysteine 124–cysteine 129, cysteine 184–cysteine 231, cysteine 233–cysteine 238, cysteine 279–cysteine 292, cysteine 281–cysteine 290, cysteine 318–cysteine 335, and cysteine 421–cysteine 447. Residue arginine 118 participates in substrate binding. Residue asparagine 146 is glycosylated (N-linked (GlcNAc...) asparagine; by host). The Proton donor/acceptor role is filled by aspartate 151. Arginine 152 is a binding site for substrate. Asparagine 235 is a glycosylation site (N-linked (GlcNAc...) asparagine; by host). 277-278 (EE) contributes to the substrate binding site. A substrate-binding site is contributed by arginine 293. Ca(2+) contacts are provided by aspartate 294, glycine 298, and aspartate 324. Arginine 368 is a substrate binding site. A glycan (N-linked (GlcNAc...) asparagine; by host) is linked at asparagine 386. Tyrosine 402 serves as the catalytic Nucleophile. N-linked (GlcNAc...) asparagine; by host glycosylation is found at asparagine 434 and asparagine 455.

This sequence belongs to the glycosyl hydrolase 34 family. Homotetramer. Ca(2+) is required as a cofactor. N-glycosylated.

Its subcellular location is the virion membrane. It is found in the host apical cell membrane. The catalysed reaction is Hydrolysis of alpha-(2-&gt;3)-, alpha-(2-&gt;6)-, alpha-(2-&gt;8)- glycosidic linkages of terminal sialic acid residues in oligosaccharides, glycoproteins, glycolipids, colominic acid and synthetic substrates.. With respect to regulation, inhibited by the neuraminidase inhibitors zanamivir (Relenza) and oseltamivir (Tamiflu). These drugs interfere with the release of progeny virus from infected cells and are effective against all influenza strains. Resistance to neuraminidase inhibitors is quite rare. Its function is as follows. Catalyzes the removal of terminal sialic acid residues from viral and cellular glycoconjugates. Cleaves off the terminal sialic acids on the glycosylated HA during virus budding to facilitate virus release. Additionally helps virus spread through the circulation by further removing sialic acids from the cell surface. These cleavages prevent self-aggregation and ensure the efficient spread of the progeny virus from cell to cell. Otherwise, infection would be limited to one round of replication. Described as a receptor-destroying enzyme because it cleaves a terminal sialic acid from the cellular receptors. May facilitate viral invasion of the upper airways by cleaving the sialic acid moieties on the mucin of the airway epithelial cells. Likely to plays a role in the budding process through its association with lipid rafts during intracellular transport. May additionally display a raft-association independent effect on budding. Plays a role in the determination of host range restriction on replication and virulence. Sialidase activity in late endosome/lysosome traffic seems to enhance virus replication. This is Neuraminidase from Influenza A virus (strain A/New Zealand:South Canterbury/35/2000 H1N1).